A 765-amino-acid chain; its full sequence is Proton-coupled zinc antiporter SLC30A5 (765 aa).

M1 bears the N-acetylmethionine mark. At 1 to 32 (MEEKYGGDVLAGPGGGGGLGPVDVPSARLTKY) the chain is on the cytoplasmic side. The helical transmembrane segment at 33–53 (IVLLCFTKFLKAVGLFESYDL) threads the bilayer. Topologically, residues 54-56 (LKA) are lumenal. The helical transmembrane segment at 57–77 (VHIVQFIFILKLGTAFFMVLF) threads the bilayer. Residues 78-98 (QKPFSSGKTITKHQWIKIFKH) lie on the Cytoplasmic side of the membrane. The chain crosses the membrane as a helical span at residues 99-119 (AVAGCIISLLWFFGLTLCGPL). Residue R120 is a topological domain, lumenal. The helical transmembrane segment at 121–141 (TLLLFEHSDIVVISLLSVLFT) threads the bilayer. Residues 142 to 152 (SSGGGPAKTRG) are Cytoplasmic-facing. Residues 153–173 (AAFFIIAVICLLLFDNDDLMA) traverse the membrane as a helical segment. At 174-193 (KMAEHPEGHHDSALTHMLYT) the chain is on the lumenal side. The helical transmembrane segment at 194-214 (AIAFLGVADHKGGVLLLVLAL) threads the bilayer. At 215–238 (CCKVGFHTASRKLSVDVGGAKRLQ) the chain is on the cytoplasmic side. A helical membrane pass occupies residues 239 to 259 (ALSHLVSVLLLCPWVIVLSVT). The Lumenal portion of the chain corresponds to 260 to 267 (TESKVESW). Residues 268-288 (FSLIMPFATVIFFVMILDFYV) traverse the membrane as a helical segment. The Cytoplasmic portion of the chain corresponds to 289-303 (DSICSVKMEVSKCAR). A helical transmembrane segment spans residues 304-324 (YGSFPIFISALLFGNFWTHPI). Over 325–342 (TDQLRAMNKAAHQESTEH) the chain is Lumenal. A helical membrane pass occupies residues 343-363 (VLSGGVVVSAIFFILSANILS). The Cytoplasmic portion of the chain corresponds to 364–418 (SPSKRGQKGTLIGYSPEGTPLYNFMGDAFQHSSQSIPRFIKESLKQILEESDSRQ). A helical membrane pass occupies residues 419 to 439 (IFYFLCLNLLFTFVELFYGVL). Residues 420-640 (FYFLCLNLLF…ILIFLSVVPL (221 aa)) form a mediates homodimerization with SLC30A6 region. Residues 440-448 (TNSLGLISD) are Lumenal-facing. Residues 449–469 (GFHMLFDCSALVMGLFAALMS) traverse the membrane as a helical segment. The Zn(2+) site is built by H451 and D455. Residues 470-483 (RWKATRIFSYGYGR) are Cytoplasmic-facing. Residues 484–504 (IEILSGFINGLFLIVIAFFVF) traverse the membrane as a helical segment. Residues 505-520 (MESVARLIDPPELDTH) are Lumenal-facing. The chain crosses the membrane as a helical span at residues 521 to 541 (MLTPVSVGGLIVNLIGICAFS). Positions 542–578 (HAHSHAHGASQGSCHSSDHSHSHHMHGHSDHGHGHSH) are his-rich loop; required for zinc transport. Residues 542 to 592 (HAHSHAHGASQGSCHSSDHSHSHHMHGHSDHGHGHSHGSAGGGMNANMRGV) are Cytoplasmic-facing. Positions 551-581 (SQGSCHSSDHSHSHHMHGHSDHGHGHSHGSA) are disordered. The helical transmembrane segment at 593-613 (FLHVLADTLGSIGVIVSTVLI) threads the bilayer. H595 and D599 together coordinate Zn(2+). Topologically, residues 614–617 (EQFG) are lumenal. A helical membrane pass occupies residues 618–638 (WFIADPLCSLFIAILIFLSVV). Topologically, residues 639–765 (PLIKDACQVL…KYCKDGTYIM (127 aa)) are cytoplasmic.

Belongs to the cation diffusion facilitator (CDF) transporter (TC 2.A.4) family. SLC30A subfamily. As to quaternary structure, heterodimer with SLC30A6/ZNT6; form a functional zinc ion transmembrane transporter. Could homodimerize through the formation of dityrosine bonds upon oxidative stress. As to expression, ubiquitously expressed. Highly expressed in pancreas, liver and kidney. Expressed abundantly in insulin-containing beta cells, undetectable in other endocrine cell types including glucagon-secreting alpha cells and most acinar cells (at protein level).

The protein resides in the golgi apparatus. The protein localises to the golgi stack membrane. It localises to the cytoplasmic vesicle. Its subcellular location is the COPII-coated vesicle membrane. It is found in the secretory vesicle membrane. The protein resides in the trans-Golgi network membrane. The protein localises to the endoplasmic reticulum membrane. It localises to the cell membrane. Its subcellular location is the apical cell membrane. The enzyme catalyses Zn(2+)(in) + 2 H(+)(out) = Zn(2+)(out) + 2 H(+)(in). Its function is as follows. Together with SLC30A6 forms a functional proton-coupled zinc ion antiporter mediating zinc entry into the lumen of organelles along the secretory pathway. By contributing to zinc ion homeostasis within the early secretory pathway, regulates the activation and folding of enzymes like alkaline phosphatases and enzymes involved in phosphatidylinositol glycan anchor biosynthesis. Through the transport of zinc into secretory granules of pancreatic beta-cells, plays an important role in the storage and secretion of insulin. In terms of biological role, zinc ion:proton antiporter mediating influx and efflux of zinc at the plasma membrane. The chain is Proton-coupled zinc antiporter SLC30A5 from Homo sapiens (Human).